Consider the following 183-residue polypeptide: uncharacterized protein (183 aa).

A Glycyl lysine isopeptide (Lys-Gly) (interchain with G-Cter in ubiquitin) cross-link involves residue K21. 2 disordered regions span residues 24–111 (NTTT…QNDN) and 160–183 (PQSI…TRRP). The span at 99–108 (QQQQQQQQQQ) shows a compositional bias: low complexity. Residues 170 to 183 (LPPSNASNTTTRRP) show a composition bias toward polar residues.

Its subcellular location is the cytoplasm. This is an uncharacterized protein from Saccharomyces cerevisiae (strain ATCC 204508 / S288c) (Baker's yeast).